A 211-amino-acid polypeptide reads, in one-letter code: Small ribosomal subunit protein eS1 (211 aa).

The interval 192 to 211 (NGLPPYEAVGDRATPELASY) is disordered.

Belongs to the eukaryotic ribosomal protein eS1 family.

The sequence is that of Small ribosomal subunit protein eS1 from Methanopyrus kandleri (strain AV19 / DSM 6324 / JCM 9639 / NBRC 100938).